A 339-amino-acid polypeptide reads, in one-letter code: 7,8-didemethyl-8-hydroxy-5-deazariboflavin synthase (339 aa).

Residues 25–256 (ATYSPAYTIV…PDITIQIPPN (232 aa)) enclose the Radical SAM core domain. Residues cysteine 39, cysteine 43, and cysteine 46 each contribute to the [4Fe-4S] cluster site.

It belongs to the radical SAM superfamily. CofG family. In terms of assembly, consists of two subunits, CofG and CofH. The cofactor is [4Fe-4S] cluster.

The enzyme catalyses 5-amino-5-(4-hydroxybenzyl)-6-(D-ribitylimino)-5,6-dihydrouracil + S-adenosyl-L-methionine = 7,8-didemethyl-8-hydroxy-5-deazariboflavin + 5'-deoxyadenosine + L-methionine + NH4(+) + H(+). The protein operates within cofactor biosynthesis; coenzyme F0 biosynthesis. Catalyzes the radical-mediated synthesis of 7,8-didemethyl-8-hydroxy-5-deazariboflavin from 5-amino-5-(4-hydroxybenzyl)-6-(D-ribitylimino)-5,6-dihydrouracil. This is 7,8-didemethyl-8-hydroxy-5-deazariboflavin synthase from Nostoc sp. (strain PCC 7120 / SAG 25.82 / UTEX 2576).